The following is a 197-amino-acid chain: Signal-regulatory protein delta (197 aa).

Residues 1–29 form the signal peptide; sequence MPIPASPLHPPLPSLLLYLLLELAGVTHV. The Ig-like V-type domain maps to 31–135; it reads HVQQTEMSQT…IKEYQSGRGT (105 aa). A disulfide bridge connects residues C51 and C117. Positions 139–158 are disordered; sequence VTEQNPRPPKNRPAGRAGSR. N-linked (GlcNAc...) asparagine glycosylation is present at N174.

It is found in the secreted. The protein is Signal-regulatory protein delta (SIRPD) of Homo sapiens (Human).